The primary structure comprises 368 residues: MSHMELALDPGDHDLLGFLLEESGGLGAAPDEALTSPPDWELPLSESLSDWDVEDFLSCLPSPPAVLNVFSNSDPCLVQHDHTYSLSQEHVSIDLDNESYEKERAQMTPLRVEEPADQEIARLILTEEEKRLLEKEGLTLPGMLPLTKMEEQVLKRVRRKIRNKKSAQESRRKKKVYVGGLESRVLKYTAQNLELQNKVQLLEEQNLSLLDQLRRLQAMVIQTANKASSSSTCVLVLLFSFCLLLVPAMYSSDTRGSLPAEHRVLSRQLRALPSEDPPQLEPPALQSEVPKDSLNPELQAASNSCCLFHLMPQAPRAEPPLQLPLPDGFSGCSCPDSISPLHANLTREEGWLPTPSPTSVILQGRYSG.

Positions 1–95 (MSHMELALDP…LSQEHVSIDL (95 aa)) are transcription activation (acidic). At 1-229 (MSHMELALDP…VIQTANKASS (229 aa)) the chain is on the cytoplasmic side. Short sequence motifs (LXXLL motif) lie at residues 16–20 (LGFLL) and 57–61 (LSCLP). The HCFC1-binding-motif (HBM) motif lies at 81–84 (DHTY). The region spanning 153–216 (VLKRVRRKIR…LSLLDQLRRL (64 aa)) is the bZIP domain. The interval 155-184 (KRVRRKIRNKKSAQESRRKKKVYVGGLESR) is basic motif. The interval 186 to 193 (LKYTAQNL) is leucine-zipper. The helical; Signal-anchor for type II membrane protein transmembrane segment at 230–250 (SSTCVLVLLFSFCLLLVPAMY) threads the bilayer. Topologically, residues 251 to 368 (SSDTRGSLPA…SVILQGRYSG (118 aa)) are lumenal. N344 carries N-linked (GlcNAc...) asparagine glycosylation.

This sequence belongs to the bZIP family. ATF subfamily. As to quaternary structure, homodimer. Interacts with HCFC1; the interaction is required to stimulate CREB3 transcriptional activity. Interacts with CREBZF; the interaction occurs only in combination with HCFC1. Interacts (via central part and transmembrane region) with DCSTAMP (via C-terminus cytoplasmic domain). Interacts with OS9. Interacts (via leucine-zipper domain) with CREBRF (via leucine-zipper domain); the interaction occurs only after CREB3 activation and promotes CREB3 degradation. Interacts (via C-terminal domain) with CCR1. In terms of processing, first proteolytically cleaved by site-1 protease (S1P) that generates membrane-associated N-terminus and a luminal C-terminus forms. The membrane-associated N-terminus form is further proteolytically processed probably by the site-2 protease (S2P) through a regulated intramembrane proteolysis (RIP), releasing the transcriptional active processed cyclic AMP-responsive element-binding protein 3 form, which is transported to the nucleus. The proteolytic cleavage is strongly induced during dendritic cell (DC) maturation and inhibited by DCSTAMP. That form is rapidly degraded. N-glycosylated. As to expression, expressed in trigeminal ganglia (at protein level).

It localises to the endoplasmic reticulum membrane. The protein resides in the golgi apparatus. The protein localises to the nucleus. It is found in the cytoplasm. Its function is as follows. Endoplasmic reticulum (ER)-bound sequence-specific transcription factor that directly binds DNA and activates transcription. Plays a role in the unfolded protein response (UPR), promoting cell survival versus ER stress-induced apoptotic cell death. Also involved in cell proliferation, migration and differentiation, tumor suppression and inflammatory gene expression. Acts as a positive regulator of LKN-1/CCL15-induced chemotaxis signaling of leukocyte cell migration. Associates with chromatin to the HERPUD1 promoter. Also induces transcriptional activation of chemokine receptors. Functions as a negative transcriptional regulator in ligand-induced transcriptional activation of the glucocorticoid receptor NR3C1 by recruiting and activating histone deacetylases (HDAC1, HDAC2 and HDAC6). Also decreases the acetylation level of histone H4. Does not promote the chemotactic activity of leukocyte cells. In terms of biological role, this is the transcriptionally active form that translocates to the nucleus and activates unfolded protein response (UPR) target genes during endoplasmic reticulum (ER) stress response. Binds the cAMP response element (CRE) (consensus: 5'-GTGACGT[AG][AG]-3') and C/EBP sequences present in many promoters to activate transcription of the genes. Binds to the unfolded protein response element (UPRE) consensus sequences sites. Binds DNA to the 5'-CCAC[GA]-3'half of ERSE II (5'-ATTGG-N-CCACG-3'). The protein is Cyclic AMP-responsive element-binding protein 3 (CREB3) of Bos taurus (Bovine).